Here is a 1562-residue protein sequence, read N- to C-terminus: Cell surface antigen I/II (1562 aa).

The signal sequence occupies residues 1-38 (MKVKKTYGFRKSKISKTLCGAVLGTVAAVSVAGQKVFA). Low complexity predominate over residues 42–54 (TTTSDVDTKVVGT). Residues 42–91 (TTTSDVDTKVVGTQTGNPATNLPEAQGSASKEAEQSQNQAGETNGSIPVE) form a disordered region. A helical region spans residues 60–551 (ATNLPEAQGS…SKAKYDQKIL (492 aa)). Residues 76-87 (QSQNQAGETNGS) show a composition bias toward polar residues. 4 Ag I/II A repeats span residues 147-221 (KKTT…QKTN), 222-303 (AANQ…QEAN), 304-385 (AANE…KKAN), and 386-467 (AANE…QKDL). Disordered stretches follow at residues 824-973 (VPKV…PTDP) and 1482-1509 (SNTVKTTTPEDPTDPTDPQDPSSPRTST). The span at 943-958 (PTPPTPTPDQPEPNKP) shows a compositional bias: pro residues. Positions 1500–1509 (QDPSSPRTST) are enriched in low complexity. The short motif at 1529–1533 (LPNTG) is the LPXTG sorting signal element. Thr-1532 carries the post-translational modification Pentaglycyl murein peptidoglycan amidated threonine. The propeptide at 1533–1562 (GVTNNAYMPLLGIIGLVTSFSLLGLKAKKD) is removed by sortase.

It belongs to the antigen I/II family. In terms of processing, detected as a 185 kDa cell surface protein, but also as 2 proteins in S.mutans culture supernatants of about 150 kDa (antigen I) and 50 kDa (antigen II); antigen II is only seen after proteolysis. Antigen I and II have the same N-terminus but different C-termini.

The protein resides in the secreted. It is found in the cell wall. Surface protein antigen implicated in dental caries. In Streptococcus mutans serotype c (strain ATCC 700610 / UA159), this protein is Cell surface antigen I/II.